We begin with the raw amino-acid sequence, 254 residues long: Pyrroloquinoline-quinone synthase (254 aa).

Belongs to the PqqC family.

The enzyme catalyses 6-(2-amino-2-carboxyethyl)-7,8-dioxo-1,2,3,4,7,8-hexahydroquinoline-2,4-dicarboxylate + 3 O2 = pyrroloquinoline quinone + 2 H2O2 + 2 H2O + H(+). It participates in cofactor biosynthesis; pyrroloquinoline quinone biosynthesis. Its function is as follows. Ring cyclization and eight-electron oxidation of 3a-(2-amino-2-carboxyethyl)-4,5-dioxo-4,5,6,7,8,9-hexahydroquinoline-7,9-dicarboxylic-acid to PQQ. The polypeptide is Pyrroloquinoline-quinone synthase (Rhodopseudomonas palustris (strain TIE-1)).